The following is a 166-amino-acid chain: Small ribosomal subunit protein uS5 (166 aa).

Residues 11-74 (LIDKVVHISR…ESAKRTMFEV (64 aa)) form the S5 DRBM domain.

This sequence belongs to the universal ribosomal protein uS5 family. Part of the 30S ribosomal subunit. Contacts proteins S4 and S8.

In terms of biological role, with S4 and S12 plays an important role in translational accuracy. Its function is as follows. Located at the back of the 30S subunit body where it stabilizes the conformation of the head with respect to the body. The polypeptide is Small ribosomal subunit protein uS5 (Syntrophobacter fumaroxidans (strain DSM 10017 / MPOB)).